The following is a 1335-amino-acid chain: Regulatory-associated protein of mTOR (1335 aa).

Phosphoserine occurs at positions 44 and 122. A Phosphoserine; by MAPK8 modification is found at Ser-696. Thr-700 carries an O-linked (GlcNAc) threonine glycan. A Phosphothreonine; by MAPK8 modification is found at Thr-706. 2 positions are modified to phosphoserine; by RPS6KA1: Ser-719 and Ser-721. Position 722 is a phosphoserine; by AMPK and RPS6KA1 (Ser-722). Position 738 is a phosphoserine (Ser-738). Residues 749–771 form a disordered region; that stretch reads GSSVAFSPGNLSTSSSASSTLGS. Low complexity predominate over residues 755–771; sequence SPGNLSTSSSASSTLGS. Ser-791 carries the post-translational modification Phosphoserine. The residue at position 792 (Ser-792) is a Phosphoserine; by AMPK. Ser-836 and Ser-855 each carry phosphoserine. Residues 853-866 show a composition bias toward polar residues; that stretch reads TSSLTQSAPASPTN. The tract at residues 853–942 is disordered; the sequence is TSSLTQSAPA…GPDQTTDDAD (90 aa). Ser-859 carries the phosphoserine; by MTOR modification. Position 863 is a phosphoserine; by MAPK8, MTOR and NLK (Ser-863). Residue Thr-865 is modified to Phosphothreonine. The residue at position 877 (Ser-877) is a Phosphoserine. Low complexity predominate over residues 877 to 887; the sequence is SPPASSTSSCS. Positions 888–898 are enriched in polar residues; it reads LTNDVAKQTVS. Glycyl lysine isopeptide (Lys-Gly) (interchain with G-Cter in ubiquitin) cross-links involve residues Lys-932 and Lys-948. Residue Ser-982 is modified to Phosphoserine. 7 WD repeats span residues 1020 to 1061, 1065 to 1106, 1121 to 1160, 1164 to 1203, 1209 to 1249, 1251 to 1291, and 1299 to 1335; these read NRNP…DYFH, PRYT…EKNP, TTRG…KVQD, GADS…SECR, EHTA…SVNV, QIVK…NNIK, and QRVG…KRVR. N6-acetyllysine is present on Lys-1097.

The protein belongs to the WD repeat RAPTOR family. In terms of assembly, part of the mechanistic target of rapamycin complex 1 (mTORC1) which contains MTOR, MLST8 and RPTOR. mTORC1 associates with AKT1S1/PRAS40, which inhibits its activity. mTORC1 associates with DEPTOR, which regulates its activity. mTORC1 binds to and is inhibited by FKBP12-rapamycin. Forms a complex with MTOR under both leucine-rich and -poor conditions. Interacts with (via TOS motifs) EIF4EBP1 and RPS6KB1; interaction is independent of its association with MTOR. Binds preferentially to poorly or non-phosphorylated forms of EIF4EBP1, and this binding is critical to the ability of MTOR to catalyze phosphorylation. Interacts with ULK1 in a nutrient-dependent manner; the interaction is reduced during starvation. Interacts with GTP-bound form of RagA/RRAGA or RagB/RRAGB and GDP-bound form of RagC/RRAGC or RagD/RRAGD, promoting recruitment of mTORC1 to the lysosomes. Interacts (when phosphorylated by AMPK) with 14-3-3 protein, leading to inhibition of its activity. Interacts with SPAG5; SPAG5 competes with MTOR for RPTOR-binding, resulting in decreased mTORC1 formation. Interacts with WAC; WAC positively regulates MTOR activity by promoting the assembly of the TTT complex composed of TELO2, TTI1 and TTI2 and the RUVBL complex composed of RUVBL1 and RUVBL2 into the TTT-RUVBL complex which leads to the dimerization of the mTORC1 complex and its subsequent activation. Interacts with G3BP1. The complex formed with G3BP1 and SPAG5 is increased by oxidative stress. Interacts with HTR6. Interacts with PIH1D1. Interacts with LARP1. Interacts with BRAT1. Interacts with SIK3. Interacts with SLC38A7; this interaction mediates the recruitment of mTORC1 to the lysosome and its subsequent activation. Insulin-stimulated phosphorylation at Ser-863 by MTOR and MAPK8 regulates mTORC1 activity. Phosphorylated at Ser-863 by NLK in response to stress, disrupting the interaction with small GTPases Rag (RagA/RRAGA, RagB/RRAGB, RagC/RRAGC and/or RagD/RRAGD), thereby preventing lysosome recruitment and activation of the mTORC1 complex. Osmotic stress also induces phosphorylation at Ser-696, Thr-706 and Ser-863 by MAPK8. Ser-863 phosphorylation is required for phosphorylation at Ser-855 and Ser-859. In response to nutrient limitation, phosphorylated at Ser-722 and Ser-792 by AMPK; phosphorylation promotes interaction with 14-3-3 proteins, leading to negative regulation of the mTORC1 complex. Phosphorylation at Ser-722 and Ser-792 by AMPK in response to glucose starvation inhibits O-GlcNAcylation by OGT and subsequent activation of mTORC1. In response to growth factors, phosphorylated at Ser-719, Ser-721 and Ser-722 by RPS6KA1, which stimulates mTORC1 activity. Phosphorylation at Ser-791 by PKA downstream of cAMP inhibits the mTORC1 complex. Phosphorylated at Ser-877 by TBK1, leading to negative regulation of the mTORC1 complex. In terms of processing, O-GlcNAcylated by OGT upon glucose sufficiency, promoting interaction with small GTPases Rag (RagA/RRAGA, RagB/RRAGB, RagC/RRAGC and/or RagD/RRAGD) and subsequent recruitment of mTORC1 to lysosomal membranes, leading to activation of the mTORC1 complex. Phosphorylation at Ser-722 and Ser-792 by AMPK in response to glucose starvation inhibits O-GlcNAcylation. Post-translationally, acetylation at Lys-1097 by EP300/p300 in response to leucine metabolite acetyl-coA promotes its activity, leading to activation of the mTORC1 complex. Acetylation is decreased in response to fasting. Phosphorylated at Ser-877 by TBK1, leading to negative regulation of the mTORC1 complex. Ubiquitinated, leading to its degradation by the proteasome. Deubiquitinated by OTUB1 via a non-catalytic mechanism. Ubiquitinated by an E3 ubiquitin ligase complex containing VHL.

The protein localises to the cytoplasm. The protein resides in the lysosome. It localises to the cytoplasmic granule. Functionally, component of the mechanistic target of rapamycin complex 1 (mTORC1), an evolutionarily conserved central nutrient sensor that stimulates anabolic reactions and macromolecule biosynthesis to promote cellular biomass generation and growth. In response to nutrients, growth factors or amino acids, mTORC1 is recruited to the lysosome membrane and promotes protein, lipid and nucleotide synthesis by phosphorylating several substrates, such as ribosomal protein S6 kinase (RPS6KB1 and RPS6KB2) and EIF4EBP1 (4E-BP1). In the same time, it inhibits catabolic pathways by phosphorylating the autophagy initiation components ULK1 and ATG13, as well as transcription factor TFEB, a master regulators of lysosomal biogenesis and autophagy. The mTORC1 complex is inhibited in response to starvation and amino acid depletion. Within the mTORC1 complex, RPTOR acts both as a molecular adapter, which (1) mediates recruitment of mTORC1 to lysosomal membranes via interaction with small GTPases Rag (RagA/RRAGA, RagB/RRAGB, RagC/RRAGC and/or RagD/RRAGD), and a (2) substrate-specific adapter, which promotes substrate specificity by binding to TOS motif-containing proteins and direct them towards the active site of the MTOR kinase domain for phosphorylation. mTORC1 complex regulates many cellular processes, such as odontoblast and osteoclast differentiation or neuronal transmission. mTORC1 complex in excitatory neuronal transmission is required for the prosocial behavior induced by the psychoactive substance lysergic acid diethylamide (LSD). The polypeptide is Regulatory-associated protein of mTOR (Mus musculus (Mouse)).